Here is a 950-residue protein sequence, read N- to C-terminus: Serine/threonine-protein phosphatase 4 regulatory subunit 1 (950 aa).

9 HEAT repeats span residues Met-1–Ser-25, Glu-26–Arg-63, Met-65–Glu-81, Arg-82–Glu-119, Ala-127–Ile-164, Asp-168–Lys-206, Ile-208–Gln-246, Ala-248–Gln-285, and Ile-287–Asn-324. Disordered stretches follow at residues Ser-326 to Asn-374, Glu-413 to Val-438, and Glu-473 to Ile-499. Basic and acidic residues predominate over residues Phe-332–Asp-365. 5 HEAT repeats span residues Lys-505–His-542, Ile-568–Asp-606, Leu-698–Ile-734, Trp-799–Lys-837, and Gln-861–Tyr-898. At Ser-935 the chain carries Phosphoserine.

Serine/threonine-protein phosphatase 4 (PP4) occurs in different assemblies of the catalytic and one or more regulatory subunits. Component of the PP4 complex PPP4C-PPP4R1. Interacts with HDAC3. As to quaternary structure, (Microbial infection) Interacts with merkel polyomavirus small tumor antigen; this interaction bridges small tumor antigen with NEMO to inhibit NF-kappa-B. Widely expressed with high expression in cultured mesangial cells. Isoform 1 and isoform 2 are expressed in renal tissues.

Its function is as follows. Regulatory subunit of serine/threonine-protein phosphatase 4. May play a role in regulation of cell division in renal glomeruli. The PPP4C-PPP4R1 PP4 complex may play a role in dephosphorylation and regulation of HDAC3. Plays a role in the inhibition of TNF-induced NF-kappa-B activation by regulating the dephosphorylation of TRAF2. (Microbial infection) Participates in merkel polyomavirus-mediated inhibition of NF-kappa-B by bridging viral small tumor antigen with NEMO. This is Serine/threonine-protein phosphatase 4 regulatory subunit 1 (PPP4R1) from Homo sapiens (Human).